A 195-amino-acid chain; its full sequence is Envelope glycoprotein L (195 aa).

A signal peptide spans 1–25 (MKIYRVLVHLSFVLGMFTKTNTVLA). The tract at residues 28 to 157 (KYDLVHGFMR…LIAPADISCY (130 aa)) is interaction with gH. The gL alphaherpesvirus-type domain maps to 28–195 (KYDLVHGFMR…TTSGSRRANA (168 aa)). Cystine bridges form between cysteine 49–cysteine 78 and cysteine 156–cysteine 178.

The protein belongs to the herpesviridae glycoprotein L (gL) family. Alphaherpesvirinae gL subfamily. Interacts with glycoprotein H (gH); this interaction is necessary for the correct processing and cell surface expression of gH. The heterodimer gH/gL seems to interact with gB trimers during fusion.

Its subcellular location is the virion membrane. The protein resides in the host cell membrane. It localises to the host Golgi apparatus. The protein localises to the host trans-Golgi network. Functionally, the heterodimer glycoprotein H-glycoprotein L is required for the fusion of viral and plasma membranes leading to virus entry into the host cell. Acts as a functional inhibitor of gH and maintains gH in an inhibited form. Upon binding to host integrins, gL dissociates from gH leading to activation of the viral fusion glycoproteins gB and gH. This chain is Envelope glycoprotein L, found in Gallus gallus (Chicken).